Here is a 134-residue protein sequence, read N- to C-terminus: Cytochrome b5 (134 aa).

Ala2 is modified (N-acetylalanine). 3 positions are modified to N6-acetyllysine: Lys7, Lys10, and Lys19. Positions Val9–His85 constitute a Cytochrome b5 heme-binding domain. The heme site is built by His44 and His68. A helical membrane pass occupies residues Trp109–Met131.

Belongs to the cytochrome b5 family.

The protein localises to the endoplasmic reticulum membrane. Its subcellular location is the microsome membrane. Functionally, cytochrome b5 is a membrane-bound hemoprotein functioning as an electron carrier for several membrane-bound oxygenases. It is also involved in several steps of the sterol biosynthesis pathway, particularly in the C-6 double bond introduction during the C-6 desaturation. In Rattus norvegicus (Rat), this protein is Cytochrome b5 (Cyb5a).